Reading from the N-terminus, the 219-residue chain is Transmembrane emp24 domain-containing protein 10 (219 aa).

An N-terminal signal peptide occupies residues 1–31; that stretch reads MSGLFGPLSRPGPLPSAWLFLLLLGPSSVLG. The tract at residues 1–142 is required for interaction with STX17; it reads MSGLFGPLSR…KNYEEIAKVE (142 aa). Residues 32 to 185 are Lumenal-facing; it reads ISFHLPVNSR…RDTNESTNTR (154 aa). Residues 41 to 193 enclose the GOLD domain; that stretch reads RKCLREEIHK…TRVLYFSIFS (153 aa). Residues 147–178 form a required for TMED10 and TMED2 cis-Golgi network localization region; it reads LEVELRRLEDLSESIVNDFAYMKKREEEMRDT. Dimethylated arginine occurs at positions 171 and 176. An N-linked (GlcNAc...) asparagine glycan is attached at Asn179. A helical membrane pass occupies residues 186 to 206; the sequence is VLYFSIFSMFCLIGLATWQVF. Positions 204–219 are interaction with COPG1; sequence QVFYLRRFFKAKKLIE. At 207–219 the chain is on the cytoplasmic side; that stretch reads YLRRFFKAKKLIE. An interaction with ARF1 and IL1B region spans residues 207–219; sequence YLRRFFKAKKLIE. The short motif at 211 to 212 is the COPII vesicle coat-binding element; the sequence is FF. Residues 211–219 carry the COPI vesicle coat-binding motif; it reads FFKAKKLIE.

Belongs to the EMP24/GP25L family. Predominantly dimeric and to a lesser extent monomeric in the ER. Monomer and dimer in ERGIC and cis-Golgi network. Forms homooligomer (via GOLD domain); the assembly is promoted by direct binding with leaderless cargos and may form a protein channel that facilitates cargo entry into the ERGIC. Forms heterooligomeric complexes with other members of the p24 family such as TMED2, TMED7 and TMED9. Interacts (via GOLD domain) with TMED2 (via GOLD domain); the complex is required for export of TMED10 from the ER to the cis-Golgi network; the complex is proposed to be involved in cis-Golgi network dynamics and / or biogenesis. Associates with the COPI vesicle coat subunits (coatomer). Tetramerization of the cytoplasmic domain at the Golgi membrane in vitro; the complex is proposed to interact with COPI coatomer and induce budding of the vesicles. Interacts with COPG1; the interaction involves TMED10 homodimer. Interacts with ARF1 (GDP-bound); the interaction probably involves a TMED10 oligomer. Interacts with SEC23A, SEC24B, SEC24C and SEC24D components of the coat protein complex II/COPII, indicative of an association of TMED10 with the COPII vesicle coat. Interacts with CD59. Interacts with MPPE1/PGAP5; the complex might recruit and sort GPI-anchored proteins to the ER-exit site, or the interaction might lead to recycling of PGAP5 between the ER and the Golgi. Interacts with F2LR1/PAR2. Interacts with KDELR2/ERD2; the interaction is disrupted by KDELR2 ligand. Found in a complex composed at least of SURF4, TMED2 and TMED10. Associates with the presenilin-dependent gamma-secretase complex. Interacts with STX17; the interaction is direct. Interacts with IL-1; the interaction is direct. Interacts with RAB21 (active GTP-bound form); the interaction is indirect and regulates TMED10 abundance and localization at the Golgi.

It localises to the endoplasmic reticulum membrane. It is found in the endoplasmic reticulum-Golgi intermediate compartment membrane. Its subcellular location is the golgi apparatus membrane. The protein localises to the golgi apparatus. The protein resides in the cis-Golgi network membrane. It localises to the trans-Golgi network membrane. It is found in the cytoplasmic vesicle. Its subcellular location is the secretory vesicle membrane. The protein localises to the cell membrane. The protein resides in the melanosome. Functionally, cargo receptor involved in protein vesicular trafficking and quality control in the endoplasmic reticulum (ER) and Golgi. The p24 protein family is a group of transmembrane proteins that bind coat protein complex I/COPI and coat protein complex II/COPII involved in vesicular trafficking between the membranes. Acts at the lumenal side for incorporation of secretory cargo molecules into transport vesicles and involved in vesicle coat formation at the cytoplasmic side. Mainly functions in the early secretory pathway and cycles between the ER, ER-Golgi intermediate compartment (ERGIC) and Golgi, mediating cargo transport through COPI and COPII-coated vesicles. In COPII vesicle-mediated anterograde transport, involved in the transport of GPI-anchored proteins by acting together with TMED2 as their cargo receptor; the function specifically implies SEC24C and SEC24D of the COPII vesicle coat and lipid raft-like microdomains of the ER. Recognizes GPI anchors structural remodeled in the ER by the GPI inositol-deacylase/PGAP1 and the metallophosphoesterase MPPE1/PGAP5. In COPI vesicle-mediated retrograde transport, involved in the biogenesis of COPI vesicles and vesicle coat recruitment. Involved in trafficking of amyloid beta A4 protein and soluble APP-beta release (independent from the modulation of gamma-secretase activity). Involved in the KDELR2-mediated retrograde transport of the toxin A subunit (CTX-A-K63)together with COPI and the COOH terminus of KDELR2. On Golgi membranes, acts as a primary receptor for ARF1-GDP, a GTP-binding protein involved in COPI-vesicle formation. Increases coatomer-dependent GTPase-activating activity of ARFGAP2 which mediates the hydrolysis of ARF1-bound GTP and therefore modulates protein trafficking from the Golgi apparatus. Involved in the exocytic trafficking of G protein-coupled receptors F2LR1/PAR2 (trypsin and tryspin-like enzyme receptor), OPRM1 (opioid receptor) and P2RY4 (UTD and UDP receptor) from the Golgi to the plasma membrane, thus contributing to receptor resensitization. In addition to its cargo receptor activity, may also act as a protein channel after oligomerization, facilitating the post-translational entry of leaderless cytoplasmic cargo into the ERGIC. Involved in the translocation into ERGIC, the vesicle entry and the secretion of leaderless cargos (lacking the secretion signal sequence), including the mature form of interleukin 1/IL-1 family members, the alpha-crystallin B chain HSPB5, the carbohydrate-binding proteins galectin-1/LGALS1 and galectin-3/LGALS3, the microtubule-associated protein Tau/MAPT, and the annexin A1/ANXA1; the translocation process is dependent on cargo protein unfolding and enhanced by chaperones HSP90AB1 and HSP90B1/GRP9. Could also associates with the presenilin-dependent gamma-secretase complex in order to regulate gamma-cleavages of the amyloid beta A4 protein to yield amyloid-beta 40/Abeta40. The protein is Transmembrane emp24 domain-containing protein 10 of Mus musculus (Mouse).